The chain runs to 287 residues: Protoheme IX farnesyltransferase (287 aa).

7 consecutive transmembrane segments (helical) span residues 19 to 39, 100 to 120, 134 to 154, 162 to 182, 212 to 232, 233 to 253, and 267 to 287; these read LMVA…VTIT, MVLC…IVAV, FALL…WLAV, MLVV…WLHA, VWFH…LLEG, VGMR…AMLA, and VLCA…VSLF.

It belongs to the UbiA prenyltransferase family. Protoheme IX farnesyltransferase subfamily.

It is found in the cell inner membrane. It catalyses the reaction heme b + (2E,6E)-farnesyl diphosphate + H2O = Fe(II)-heme o + diphosphate. The protein operates within porphyrin-containing compound metabolism; heme O biosynthesis; heme O from protoheme: step 1/1. In terms of biological role, converts heme B (protoheme IX) to heme O by substitution of the vinyl group on carbon 2 of heme B porphyrin ring with a hydroxyethyl farnesyl side group. The protein is Protoheme IX farnesyltransferase of Nitratidesulfovibrio vulgaris (strain DP4) (Desulfovibrio vulgaris).